The following is a 136-amino-acid chain: Glycine-rich RNA-binding protein 4, mitochondrial (136 aa).

The N-terminal 33 residues, 1–33, are a transit peptide targeting the mitochondrion; it reads MAFCNKLSGILRQGVSQSSNGPVTSMLGSLRYM. An RRM domain is found at 35 to 113; that stretch reads SKLFVGGLSW…RQIRVNLATE (79 aa). Serine 43 carries the phosphoserine modification. The tract at residues 113-136 is disordered; the sequence is ERSSAPRSSFGGGGGYGGGGGGGY. Gly residues predominate over residues 122–136; the sequence is FGGGGGYGGGGGGGY. The interval 123-135 is glycine-rich (GR) required for cell-to-cell movement; sequence GGGGGYGGGGGGG.

Belongs to the GR-RBP family. Binds to small phloem-mobile single-stranded RNAs (ss-sRNA, e.g. small interfering RNA (siRNA) and microRNA (miRNA)) in the phloeme exudate, including viral-derived sRNA (vsiRNA). As to expression, abundantly expressed in young plants, root tips, and flowers, but weakly in mature leaves and stems, implying highly expression in actively proliferating organs.

It is found in the mitochondrion. The protein localises to the secreted. Possibly has a role in RNA transcription or processing during stress. Binds sequence non-specifically to RNAs and DNAs. Mediates cell-to-cell trafficking of RNA interference (RNAi) signals (small RNAs (sRNA), e.g. small interfering RNA (siRNA) and microRNA (miRNA)) which regulate growth and development, as well as responses to environmental inputs, including pathogen attack; can compromise zucchini yellow mosaic virus (ZYMV) and tobacco rattle virus (TRV) infections at the early stage. The chain is Glycine-rich RNA-binding protein 4, mitochondrial from Arabidopsis thaliana (Mouse-ear cress).